A 215-amino-acid polypeptide reads, in one-letter code: Ribonuclease T (215 aa).

Positions 20-194 (VVIDVETAGF…YDTLQTAKLF (175 aa)) constitute an Exonuclease domain. Mg(2+) is bound by residues aspartate 23, glutamate 25, histidine 181, and aspartate 186. Histidine 181 acts as the Proton donor/acceptor in catalysis.

Belongs to the RNase T family. Homodimer. Mg(2+) is required as a cofactor.

Functionally, trims short 3' overhangs of a variety of RNA species, leaving a one or two nucleotide 3' overhang. Responsible for the end-turnover of tRNA: specifically removes the terminal AMP residue from uncharged tRNA (tRNA-C-C-A). Also appears to be involved in tRNA biosynthesis. This Yersinia pseudotuberculosis serotype O:1b (strain IP 31758) protein is Ribonuclease T.